The following is a 256-amino-acid chain: Thiazole synthase (256 aa).

Lysine 96 acts as the Schiff-base intermediate with DXP in catalysis. 1-deoxy-D-xylulose 5-phosphate-binding positions include glycine 157, 183-184, and 205-206; these read AG and NT.

Belongs to the ThiG family. In terms of assembly, homotetramer. Forms heterodimers with either ThiH or ThiS.

It is found in the cytoplasm. It catalyses the reaction [ThiS sulfur-carrier protein]-C-terminal-Gly-aminoethanethioate + 2-iminoacetate + 1-deoxy-D-xylulose 5-phosphate = [ThiS sulfur-carrier protein]-C-terminal Gly-Gly + 2-[(2R,5Z)-2-carboxy-4-methylthiazol-5(2H)-ylidene]ethyl phosphate + 2 H2O + H(+). It participates in cofactor biosynthesis; thiamine diphosphate biosynthesis. Catalyzes the rearrangement of 1-deoxy-D-xylulose 5-phosphate (DXP) to produce the thiazole phosphate moiety of thiamine. Sulfur is provided by the thiocarboxylate moiety of the carrier protein ThiS. In vitro, sulfur can be provided by H(2)S. The polypeptide is Thiazole synthase (Bacillus cereus (strain AH187)).